Consider the following 282-residue polypeptide: Stress response regulator protein 1 (282 aa).

2 stretches are compositionally biased toward low complexity: residues 12 to 30 (NLSR…HSST) and 41 to 58 (SLDT…SNNN). Disordered stretches follow at residues 12-31 (NLSR…SSTV), 41-84 (SLDT…DDED), and 112-139 (LTPF…TTVV). The span at 66–77 (SDYNSYTHNQYY) shows a compositional bias: polar residues. Residues 125–139 (SIISSKSSNKSTTVV) show a composition bias toward low complexity. One can recognise a Response regulatory domain in the interval 155-273 (SFLIVDDNII…LDFMANSIDD (119 aa)). Asp206 is modified (4-aspartylphosphate).

Functionally, required for stress adaptation, morphogenesis and virulence. This Candida albicans (strain WO-1) (Yeast) protein is Stress response regulator protein 1 (SRR1).